The chain runs to 120 residues: U13-lycotoxin-Ls1a (120 aa).

The first 16 residues, 1–16, serve as a signal peptide directing secretion; that stretch reads MKILFVLISILHAVYC. The propeptide occupies 17-54; sequence FSSEEDVDSAYLANELEPVEDINSEQYAALEPKEEHER. 4 cysteine pairs are disulfide-bonded: Cys-56–Cys-70, Cys-63–Cys-76, Cys-69–Cys-87, and Cys-78–Cys-85. The Agouti domain maps to 56-95; that stretch reads CADMGQDCKDDCDCCLNIATCNCWFGRYFCSCTFGDYQTC.

This sequence belongs to the neurotoxin 05 (agouti) family. Contains 6 disulfide bonds. Expressed by the venom gland.

It localises to the secreted. The chain is U13-lycotoxin-Ls1a from Lycosa singoriensis (Wolf spider).